Consider the following 344-residue polypeptide: Methionine import ATP-binding protein MetN (344 aa).

The region spanning 2–241 (IEIRNLSQRF…PHHEVTRALI (240 aa)) is the ABC transporter domain. Position 38-45 (38-45 (GRSGAGKS)) interacts with ATP.

This sequence belongs to the ABC transporter superfamily. Methionine importer (TC 3.A.1.24) family. In terms of assembly, the complex is composed of two ATP-binding proteins (MetN), two transmembrane proteins (MetI) and a solute-binding protein (MetQ).

The protein localises to the cell inner membrane. The catalysed reaction is L-methionine(out) + ATP + H2O = L-methionine(in) + ADP + phosphate + H(+). It catalyses the reaction D-methionine(out) + ATP + H2O = D-methionine(in) + ADP + phosphate + H(+). In terms of biological role, part of the ABC transporter complex MetNIQ involved in methionine import. Responsible for energy coupling to the transport system. This is Methionine import ATP-binding protein MetN from Burkholderia thailandensis (strain ATCC 700388 / DSM 13276 / CCUG 48851 / CIP 106301 / E264).